The primary structure comprises 465 residues: Siroheme synthase (465 aa).

The interval 1 to 203 is precorrin-2 dehydrogenase /sirohydrochlorin ferrochelatase; that stretch reads MDFLPLFHSL…GRPAEAERLL (203 aa). NAD(+) is bound by residues 22-23 and 43-44; these read EV and PQ. Phosphoserine is present on S128. The uroporphyrinogen-III C-methyltransferase stretch occupies residues 217–465; sequence GEVYLVGAGP…AWFEGAREDA (249 aa). P226 provides a ligand contact to S-adenosyl-L-methionine. Residue D249 is the Proton acceptor of the active site. The active-site Proton donor is K271. Residues 302 to 304, I307, 332 to 333, M384, and G413 each bind S-adenosyl-L-methionine; these read GGD and TA.

The protein in the N-terminal section; belongs to the precorrin-2 dehydrogenase / sirohydrochlorin ferrochelatase family. It in the C-terminal section; belongs to the precorrin methyltransferase family.

The catalysed reaction is uroporphyrinogen III + 2 S-adenosyl-L-methionine = precorrin-2 + 2 S-adenosyl-L-homocysteine + H(+). The enzyme catalyses precorrin-2 + NAD(+) = sirohydrochlorin + NADH + 2 H(+). It carries out the reaction siroheme + 2 H(+) = sirohydrochlorin + Fe(2+). Its pathway is cofactor biosynthesis; adenosylcobalamin biosynthesis; precorrin-2 from uroporphyrinogen III: step 1/1. It functions in the pathway cofactor biosynthesis; adenosylcobalamin biosynthesis; sirohydrochlorin from precorrin-2: step 1/1. The protein operates within porphyrin-containing compound metabolism; siroheme biosynthesis; precorrin-2 from uroporphyrinogen III: step 1/1. It participates in porphyrin-containing compound metabolism; siroheme biosynthesis; siroheme from sirohydrochlorin: step 1/1. Its pathway is porphyrin-containing compound metabolism; siroheme biosynthesis; sirohydrochlorin from precorrin-2: step 1/1. Functionally, multifunctional enzyme that catalyzes the SAM-dependent methylations of uroporphyrinogen III at position C-2 and C-7 to form precorrin-2 via precorrin-1. Then it catalyzes the NAD-dependent ring dehydrogenation of precorrin-2 to yield sirohydrochlorin. Finally, it catalyzes the ferrochelation of sirohydrochlorin to yield siroheme. This Pseudomonas aeruginosa (strain ATCC 15692 / DSM 22644 / CIP 104116 / JCM 14847 / LMG 12228 / 1C / PRS 101 / PAO1) protein is Siroheme synthase.